A 494-amino-acid chain; its full sequence is tRNA-2-methylthio-N(6)-dimethylallyladenosine synthase (494 aa).

One can recognise an MTTase N-terminal domain in the interval 12-131 (PTYRVVTYGC…LPVLLKRARH (120 aa)). Residues Cys-21, Cys-60, Cys-94, Cys-168, Cys-172, and Cys-175 each coordinate [4Fe-4S] cluster. The Radical SAM core domain maps to 154–385 (RDSAYSAWVS…ELVDDIAWQE (232 aa)). The TRAM domain maps to 387–457 (KAQVGRAVEV…PHHLVADGGL (71 aa)).

Belongs to the methylthiotransferase family. MiaB subfamily. In terms of assembly, monomer. The cofactor is [4Fe-4S] cluster.

It is found in the cytoplasm. The catalysed reaction is N(6)-dimethylallyladenosine(37) in tRNA + (sulfur carrier)-SH + AH2 + 2 S-adenosyl-L-methionine = 2-methylsulfanyl-N(6)-dimethylallyladenosine(37) in tRNA + (sulfur carrier)-H + 5'-deoxyadenosine + L-methionine + A + S-adenosyl-L-homocysteine + 2 H(+). Functionally, catalyzes the methylthiolation of N6-(dimethylallyl)adenosine (i(6)A), leading to the formation of 2-methylthio-N6-(dimethylallyl)adenosine (ms(2)i(6)A) at position 37 in tRNAs that read codons beginning with uridine. The protein is tRNA-2-methylthio-N(6)-dimethylallyladenosine synthase of Cutibacterium acnes (strain DSM 16379 / KPA171202) (Propionibacterium acnes).